The following is a 436-amino-acid chain: uncharacterized protein (436 aa).

This is an uncharacterized protein from Treponema pallidum (strain Nichols).